The sequence spans 260 residues: Cytosolic Fe-S cluster assembly factor Nubp2 homolog (260 aa).

14-21 (GKGGVGKS) lines the ATP pocket. Residues Cys188 and Cys191 each coordinate [4Fe-4S] cluster.

Belongs to the Mrp/NBP35 ATP-binding proteins family. NUBP2/CFD1 subfamily. As to quaternary structure, heterotetramer of 2 Nubp1 and 2 Nubp2 chains. [4Fe-4S] cluster serves as cofactor.

Its subcellular location is the cytoplasm. Its function is as follows. Component of the cytosolic iron-sulfur (Fe/S) protein assembly (CIA) machinery. Required for maturation of extramitochondrial Fe-S proteins. The Nubp1-Nubp2 heterotetramer forms a Fe-S scaffold complex, mediating the de novo assembly of an Fe-S cluster and its transfer to target apoproteins. This chain is Cytosolic Fe-S cluster assembly factor Nubp2 homolog, found in Drosophila simulans (Fruit fly).